A 494-amino-acid polypeptide reads, in one-letter code: Amidophosphoribosyltransferase (494 aa).

Positions 1 to 10 (MFNYSGLNEE) are excised as a propeptide. The active-site Nucleophile is the Cys11. Positions 11–231 (CGVFGIWNHP…AGEYVVINDK (221 aa)) constitute a Glutamine amidotransferase type-2 domain. Residues Ser294, Asp356, and Asp357 each coordinate Mg(2+).

The protein in the C-terminal section; belongs to the purine/pyrimidine phosphoribosyltransferase family. Requires Mg(2+) as cofactor.

The enzyme catalyses 5-phospho-beta-D-ribosylamine + L-glutamate + diphosphate = 5-phospho-alpha-D-ribose 1-diphosphate + L-glutamine + H2O. The protein operates within purine metabolism; IMP biosynthesis via de novo pathway; N(1)-(5-phospho-D-ribosyl)glycinamide from 5-phospho-alpha-D-ribose 1-diphosphate: step 1/2. Functionally, catalyzes the formation of phosphoribosylamine from phosphoribosylpyrophosphate (PRPP) and glutamine. This Staphylococcus aureus (strain COL) protein is Amidophosphoribosyltransferase.